A 325-amino-acid chain; its full sequence is Phosphatidylglycerol--prolipoprotein diacylglyceryl transferase (325 aa).

Transmembrane regions (helical) follow at residues 19-39, 47-67, 93-113, and 119-139; these read IPLR…VWFG, GGKA…GLVG, IWEG…GAWI, and GIPL…AQAI. Arginine 141 lines the a 1,2-diacyl-sn-glycero-3-phospho-(1'-sn-glycerol) pocket. A run of 3 helical transmembrane segments spans residues 175–195, 207–225, and 237–257; these read HPTF…VIWA, FALY…EYMR, and LNVW…VISA. The span at 266 to 312 shows a compositional bias: basic and acidic residues; the sequence is IVEPDRDATPAEKDGSGEDGSGEKGVAKADAAAKDPLTKDEPGKDAT. A disordered region spans residues 266-325; the sequence is IVEPDRDATPAEKDGSGEDGSGEKGVAKADAAAKDPLTKDEPGKDATAENAGAAGAAEKA. Positions 313–325 are enriched in low complexity; sequence AENAGAAGAAEKA.

It belongs to the Lgt family.

The protein localises to the cell membrane. The enzyme catalyses L-cysteinyl-[prolipoprotein] + a 1,2-diacyl-sn-glycero-3-phospho-(1'-sn-glycerol) = an S-1,2-diacyl-sn-glyceryl-L-cysteinyl-[prolipoprotein] + sn-glycerol 1-phosphate + H(+). Its pathway is protein modification; lipoprotein biosynthesis (diacylglyceryl transfer). Its function is as follows. Catalyzes the transfer of the diacylglyceryl group from phosphatidylglycerol to the sulfhydryl group of the N-terminal cysteine of a prolipoprotein, the first step in the formation of mature lipoproteins. In Streptomyces griseus subsp. griseus (strain JCM 4626 / CBS 651.72 / NBRC 13350 / KCC S-0626 / ISP 5235), this protein is Phosphatidylglycerol--prolipoprotein diacylglyceryl transferase.